Reading from the N-terminus, the 172-residue chain is Transcriptional regulator CdrL (172 aa).

A disordered region spans residues 72 to 113 (SPSAVEEVRTTPASGGRADAEEPGDDGETDAEHADTSATGDE). The DZANK-type zinc finger occupies 116–160 (CSQCGAELSADHVYCPNCGGKATHRVFCECGDEIRADWAFCPRCG).

It belongs to the CdrL family.

Its subcellular location is the cytoplasm. Functionally, transcriptional regulator involved in the control of cell division. This Halobacterium salinarum (strain ATCC 29341 / DSM 671 / R1) protein is Transcriptional regulator CdrL.